The primary structure comprises 321 residues: MRGAQVYRWQIPMDAGVVLRDRRLKTRDGLFVHLQQDDRQGWGEISPLPGFSLESLAEAEAALLAWVNAWRIGESPALPAIPSAAFGISCALAELDGTLPEAADYRAAPLCSGDPDELFESLAAMPGEKIAKVKVGLYEAVRDGMVVNLLLEAIPDLRLRLDANRAWTPLKAQQFAKYVNPDYRDRIAFLEEPCKSRDDSRAFAQETGIAIAWDESLREAGFEFVAEPGVTALVIKPTLTGSLDKVREQVAAAHALGLTAVISSSIESSLGLTQLARIAAWLTPQTIPGLDTLNLMQSQLVRRWPGNPLPYLDIEALEPLL.

Lys134 serves as the catalytic Proton donor. Positions 162, 191, and 214 each coordinate Mg(2+). Lys236 serves as the catalytic Proton acceptor.

This sequence belongs to the mandelate racemase/muconate lactonizing enzyme family. MenC type 1 subfamily. It depends on a divalent metal cation as a cofactor.

It catalyses the reaction (1R,6R)-6-hydroxy-2-succinyl-cyclohexa-2,4-diene-1-carboxylate = 2-succinylbenzoate + H2O. The protein operates within quinol/quinone metabolism; 1,4-dihydroxy-2-naphthoate biosynthesis; 1,4-dihydroxy-2-naphthoate from chorismate: step 4/7. Its pathway is quinol/quinone metabolism; menaquinone biosynthesis. In terms of biological role, converts 2-succinyl-6-hydroxy-2,4-cyclohexadiene-1-carboxylate (SHCHC) to 2-succinylbenzoate (OSB). The sequence is that of o-succinylbenzoate synthase from Enterobacter sp. (strain 638).